Consider the following 437-residue polypeptide: Membrane protein NfeD1b (437 aa).

The next 5 membrane-spanning stretches (helical) occupy residues 2 to 22, 231 to 251, 253 to 273, 288 to 308, and 316 to 336; these read LQIKGFRAALLGIFLLSLLGV, WLTNPVIVPILLTIAFLGLTV, LFSPGVGLPGTAGLIALLLFF, LLFIAGVILILLEIFLPGGII, and IIASLFLAAGSFTVMAVSLLI.

This sequence belongs to the NfeD family.

It localises to the cell membrane. The sequence is that of Membrane protein NfeD1b from Bacillus subtilis (strain 168).